The primary structure comprises 453 residues: MEELGVKRRIVLVPVPAQGHVTPIMQLGKALYSKGFSITVVLTQYNRVSSSKDFSDFHFLTIPGSLTESDLKNLGPFKFLFKLNQICEASFKQCIGQLLQEQGNDIACVVYDEYMYFSQAAVKEFQLPSVLFSTTSATAFVCRSVLSRVNAESFLLDMKDPKVSDKEFPGLHPLRYKDLPTSAFGPLESILKVYSETVNIRTASAVIINSTSCLESSSLAWLQKQLQVPVYPIGPLHIAASAPSSLLEEDRSCLEWLNKQKIGSVIYISLGSLALMETKDMLEMAWGLRNSNQPFLWVIRPGSIPGSEWTESLPEEFSRLVSERGYIVKWAPQIEVLRHPAVGGFWSHCGWNSTLESIGEGVPMICRPFTGDQKVNARYLERVWRIGVQLEGELDKGTVERAVERLIMDEEGAEMRKRVINLKEKLQASVKSRGSSFSSLDNFVNSLKMMNFM.

UDP-alpha-D-glucose is bound by residues Ser272, 331–333, 348–356, and 370–373; these read APQ, HCGWNSTLE, and TGDQ.

Belongs to the UDP-glycosyltransferase family.

In terms of biological role, possesses low quercetin 3-O-glucosyltransferase and 7-O-glucosyltransferase activities in vitro. The polypeptide is UDP-glycosyltransferase 76E1 (UGT76E1) (Arabidopsis thaliana (Mouse-ear cress)).